A 405-amino-acid polypeptide reads, in one-letter code: Eukaryotic initiation factor 4A (405 aa).

Residues 31 to 59 (ECFEALNLEGDLLRGIFAYGFEKPSAIQQ) carry the Q motif motif. Residues 62-232 (IKPILDGYDT…TQFMRDPKRI (171 aa)) enclose the Helicase ATP-binding domain. 75 to 82 (AQSGTGKT) serves as a coordination point for ATP. The DEAD box motif lies at 180-183 (DEAD). The Helicase C-terminal domain occupies 243 to 404 (GIRQFYVGVE…EMPMGITDIL (162 aa)).

This sequence belongs to the DEAD box helicase family. eIF4A subfamily. EIF4F is a multi-subunit complex, the composition of which varies with external and internal environmental conditions. It is composed of at least EIF4A, EIF4E and EIF4G.

The enzyme catalyses ATP + H2O = ADP + phosphate + H(+). Its function is as follows. ATP-dependent RNA helicase which is a subunit of the eIF4F complex involved in cap recognition and is required for mRNA binding to ribosome. In the current model of translation initiation, eIF4A unwinds RNA secondary structures in the 5'-UTR of mRNAs which is necessary to allow efficient binding of the small ribosomal subunit, and subsequent scanning for the initiator codon. This chain is Eukaryotic initiation factor 4A (EIF4-A), found in Cryptosporidium parvum.